A 378-amino-acid polypeptide reads, in one-letter code: Protein RecA (378 aa).

79–86 (GPESSGKT) serves as a coordination point for ATP.

It belongs to the RecA family.

It localises to the cytoplasm. Can catalyze the hydrolysis of ATP in the presence of single-stranded DNA, the ATP-dependent uptake of single-stranded DNA by duplex DNA, and the ATP-dependent hybridization of homologous single-stranded DNAs. It interacts with LexA causing its activation and leading to its autocatalytic cleavage. The chain is Protein RecA from Streptococcus equi subsp. zooepidemicus (strain MGCS10565).